The primary structure comprises 107 residues: Nucleoid-associated protein RT0857 (107 aa).

The protein belongs to the YbaB/EbfC family. In terms of assembly, homodimer.

Its subcellular location is the cytoplasm. It is found in the nucleoid. In terms of biological role, binds to DNA and alters its conformation. May be involved in regulation of gene expression, nucleoid organization and DNA protection. This Rickettsia typhi (strain ATCC VR-144 / Wilmington) protein is Nucleoid-associated protein RT0857.